Here is a 2087-residue protein sequence, read N- to C-terminus: Rho GTPase-activating protein 32 (2087 aa).

Positions 131-245 constitute a PX; atypical domain; sequence GSIQLSLSEE…LTWMEIDNKG (115 aa). The region spanning 259–321 is the SH3 domain; the sequence is PAVGAAHVIK…PGHCVELINQ (63 aa). Residues 372–567 enclose the Rho-GAP domain; that stretch reads CDLGEHLLNS…FILNHVDVLF (196 aa). Phosphoserine occurs at positions 706, 709, 732, and 738. Residues 818-858 are disordered; sequence FLDSPGYSKDKPSANKKDAETGSSQCQTPGSTASSEPVSPL. Basic and acidic residues predominate over residues 825-837; that stretch reads SKDKPSANKKDAE. Polar residues predominate over residues 838–854; it reads TGSSQCQTPGSTASSEP. Ser852, Ser856, and Ser892 each carry phosphoserine. Residues 927–938 are compositionally biased toward low complexity; sequence SNTTAQNASSST. Disordered regions lie at residues 927 to 1038, 1103 to 1143, and 1169 to 1257; these read SNTT…PPKN, PAEQ…EQHH, and VPLD…ENTS. Ser952 carries the phosphoserine modification. Low complexity-rich tracts occupy residues 994–1005 and 1019–1029; these read SVSSSQSKAVAS and QDSVPVSSVSL. The span at 1124-1138 shows a compositional bias: polar residues; it reads TTATGDPTHSNTTES. Over residues 1172–1182 the composition is skewed to basic and acidic residues; sequence DSEKSDDHVSF. Residues 1188 to 1203 are compositionally biased toward polar residues; the sequence is GKNSMPTVSFLDQDQS. The residue at position 1203 (Ser1203) is a Phosphoserine. Positions 1222-1232 are enriched in basic and acidic residues; it reads DKLHHPLEFAD. An interaction with GAB2 region spans residues 1391–1711; sequence RVPLLHLRAE…YSYAGLAPRP (321 aa). Arg1523 and Arg1533 each carry asymmetric dimethylarginine. Ser1585 is modified (phosphoserine). The interval 1685–2087 is interaction with FYN; that stretch reads PNRDFAFYNP…QHPETQIHAE (403 aa). The interval 1798–1896 is disordered; that stretch reads PGKTGLLSVA…QFCESKNGPP (99 aa). A compositionally biased stretch (basic and acidic residues) spans 1823–1838; sequence GEDRFYRRHPEAEMDR. Positions 1847 to 1862 are enriched in polar residues; it reads STQPEKPSLPQKQSSL. The segment covering 1875–1889 has biased composition (basic and acidic residues); that stretch reads PEHRAHQEASHRQFC. Arg2037 is subject to Omega-N-methylarginine.

Belongs to the PX domain-containing GAP family. Interacts with NTRK1 (via cytoplasmic domain); the interaction is independent of the phosphorylation state of NTRK1. Interacts with SHC3 (via SH2 domain). Interacts with RASA1 (via SH3 domain); the interaction is necessary for the Ras activation and cell transforming activities of ARHGAP32. Interacts with GAB1 and GAB2. Interacts with CRK and CRKL. Found in a complex with CRKL and BCAR1; upon EGF stimulation BCAR1 may be replaced by EGFR. Interacts with NCK1 (via SH3 domain); NCK1 recruits phosphorylated BCAR1 to the complex. Isoform 2 interacts with FYN; the interaction appears to be dependent on tyrosine phosphorylation of ARHGAP32. Interacts with EGFR; the interaction requires EGF stimulation and is increased by SHC3. Interacts with CDC42; the interaction requires constitutively active CDC42. Interacts with CTNNB1. Interacts with GRIN2B. Interacts with DLG4 and CDH2. Interacts with GPHN. Post-translationally, isoform 2 is phosphorylated on multiple tyrosine residues by FYN. Phosphorylated tyrosine residues undergo dephosphorylation after stimulation of NMDA receptors. Phosphorylated in vitro by CaMK2 in the presence of calmodulin and calcium; which inhibits GAP activity. Isoform 1 and isoform 2 are highly expressed in brain and testis. Isoform 1 is also expressed in other tissues such as lung, liver and spleen.

Its subcellular location is the postsynaptic density. It localises to the cell projection. It is found in the dendritic spine. The protein resides in the cytoplasm. The protein localises to the cell cortex. Its subcellular location is the endosome membrane. It localises to the golgi apparatus membrane. It is found in the endoplasmic reticulum membrane. The protein resides in the membrane. In terms of biological role, GTPase-activating protein (GAP) promoting GTP hydrolysis on RHOA, CDC42 and RAC1 small GTPases. May be involved in the differentiation of neuronal cells during the formation of neurite extensions. Involved in NMDA receptor activity-dependent actin reorganization in dendritic spines. May mediate cross-talks between Ras- and Rho-regulated signaling pathways in cell growth regulation. Isoform 2 has higher GAP activity. The polypeptide is Rho GTPase-activating protein 32 (ARHGAP32) (Homo sapiens (Human)).